The chain runs to 502 residues: 1-aminocyclopropane-1-carboxylate synthase-like protein 1 (502 aa).

A disordered region spans residues 15-35 (CPGSDSIQDLPSNKGDGLERE). Glutamate 106 provides a ligand contact to substrate. At lysine 324 the chain carries N6-(pyridoxal phosphate)lysine.

The protein belongs to the class-I pyridoxal-phosphate-dependent aminotransferase family.

In terms of biological role, does not catalyze the synthesis of 1-aminocyclopropane-1-carboxylate but is capable of catalyzing the deamination of L-vinylglycine. The chain is 1-aminocyclopropane-1-carboxylate synthase-like protein 1 (ACCS) from Bos taurus (Bovine).